The following is a 125-amino-acid chain: Prepro-urotensin II-gamma (125 aa).

Positions 1-21 (MMCNLLLSCSVLLLSCSHLLA) are cleaved as a signal peptide. The propeptide occupies 109-111 (QFR). An intrachain disulfide couples Cys-119 to Cys-124.

The protein belongs to the urotensin-2 family.

Its subcellular location is the secreted. Functionally, urotensin is found in the teleost caudal neurosecretory system. It has a suggested role in osmoregulation and as a corticotropin-releasing factor. The non-hormonal portion of this precursor may be a urotensin binding protein, urophysin. The sequence is that of Prepro-urotensin II-gamma from Cyprinus carpio (Common carp).